The sequence spans 156 residues: RING finger protein 224 (156 aa).

The segment at 23–70 (CIICYSAYDLSVHLPRRLYCGHTFCQACMQRLDMPAHEQHWIPCPQCR) adopts an RING-type zinc-finger fold.

This Mus musculus (Mouse) protein is RING finger protein 224 (Rnf224).